The chain runs to 84 residues: Large ribosomal subunit protein bL27 (84 aa).

The segment at 1-20 (MAHKKAGGSTRNGRDSNPKY) is disordered.

The protein belongs to the bacterial ribosomal protein bL27 family.

In Francisella tularensis subsp. tularensis (strain FSC 198), this protein is Large ribosomal subunit protein bL27.